The primary structure comprises 154 residues: Large ribosomal subunit protein uL30 (154 aa).

It belongs to the universal ribosomal protein uL30 family. Part of the 50S ribosomal subunit.

This is Large ribosomal subunit protein uL30 from Methanococcus maripaludis (strain C5 / ATCC BAA-1333).